The primary structure comprises 290 residues: MASLIDIKQRITSTRKTSQITKAMQMVSAAKLGRAESNARSYEPYVSKIKDVVTHVASTGNSSDHPMLVSRPVHRTGYIVLTSDTGLAGSYNSSVIKEVFQEINKKHTSSDEYAIITVGRSARDFFKARQMNVVLEVQGITDHPIFAEIKDIASNTVQMFEDGVYDEVFIYYNHHINSISSELRKEQLLPLTEFHEKGKETDVDLTTYEFEPSEQEILEVLLPQYVESLIFGALLDAKAAEHAARMTAMRSATDNASDLISDLSLQYNRARQAAITQEITEIVGGAAALE.

It belongs to the ATPase gamma chain family. F-type ATPases have 2 components, CF(1) - the catalytic core - and CF(0) - the membrane proton channel. CF(1) has five subunits: alpha(3), beta(3), gamma(1), delta(1), epsilon(1). CF(0) has three main subunits: a, b and c.

The protein localises to the cell membrane. Its function is as follows. Produces ATP from ADP in the presence of a proton gradient across the membrane. The gamma chain is believed to be important in regulating ATPase activity and the flow of protons through the CF(0) complex. This chain is ATP synthase gamma chain, found in Listeria innocua serovar 6a (strain ATCC BAA-680 / CLIP 11262).